The following is a 130-amino-acid chain: Histone H2A type 3 (130 aa).

Residues 1–22 (MSGRGKQGGKARAKAKSRSSRA) are disordered. The residue at position 2 (Ser-2) is an N-acetylserine. Ser-2 is subject to Phosphoserine; by RPS6KA5. The residue at position 4 (Arg-4) is a Citrulline; alternate. Position 4 is a symmetric dimethylarginine; by PRMT5; alternate (Arg-4). N6-(2-hydroxyisobutyryl)lysine is present on Lys-6. The span at 7-19 (QGGKARAKAKSRS) shows a compositional bias: basic residues. Residue Lys-10 is modified to N6-(2-hydroxyisobutyryl)lysine; alternate. 2 positions are modified to N6-(beta-hydroxybutyryl)lysine; alternate: Lys-10 and Lys-14. At Lys-10 the chain carries N6-lactoyllysine; alternate. Lys-10 carries the post-translational modification N6-succinyllysine; alternate. Lys-14 participates in a covalent cross-link: Glycyl lysine isopeptide (Lys-Gly) (interchain with G-Cter in ubiquitin); alternate. A Glycyl lysine isopeptide (Lys-Gly) (interchain with G-Cter in ubiquitin) cross-link involves residue Lys-16. The residue at position 37 (Lys-37) is an N6-(2-hydroxyisobutyryl)lysine; alternate. At Lys-37 the chain carries N6-(beta-hydroxybutyryl)lysine; alternate. Lys-37 carries the N6-crotonyllysine; alternate modification. N6-(2-hydroxyisobutyryl)lysine is present on residues Lys-75 and Lys-76. N6-(2-hydroxyisobutyryl)lysine; alternate is present on Lys-96. At Lys-96 the chain carries N6-(beta-hydroxybutyryl)lysine; alternate. N6-succinyllysine; alternate is present on Lys-96. An N6-glutaryllysine; alternate modification is found at Lys-96. Gln-105 is subject to N5-methylglutamine. Lys-119 carries the N6-(2-hydroxyisobutyryl)lysine; alternate modification. Lys-119 carries the N6-(beta-hydroxybutyryl)lysine; alternate modification. 2 positions are modified to N6-crotonyllysine; alternate: Lys-119 and Lys-120. An N6-glutaryllysine; alternate mark is found at Lys-119 and Lys-120. Residue Lys-120 forms a Glycyl lysine isopeptide (Lys-Gly) (interchain with G-Cter in ubiquitin); alternate linkage. At Thr-121 the chain carries Phosphothreonine; by DCAF1. Lys-126 is subject to N6-crotonyllysine; alternate. At Lys-126 the chain carries N6-glutaryllysine; alternate.

Belongs to the histone H2A family. In terms of assembly, the nucleosome is a histone octamer containing two molecules each of H2A, H2B, H3 and H4 assembled in one H3-H4 heterotetramer and two H2A-H2B heterodimers. The octamer wraps approximately 147 bp of DNA. In terms of processing, deiminated on Arg-4 in granulocytes upon calcium entry. Post-translationally, monoubiquitination of Lys-120 (H2AK119Ub) by RING1, TRIM37 and RNF2/RING2 complex gives a specific tag for epigenetic transcriptional repression and participates in X chromosome inactivation of female mammals. It is involved in the initiation of both imprinted and random X inactivation. Ubiquitinated H2A is enriched in inactive X chromosome chromatin. Ubiquitination of H2A functions downstream of methylation of 'Lys-27' of histone H3 (H3K27me). H2AK119Ub by RNF2/RING2 can also be induced by ultraviolet and may be involved in DNA repair. Monoubiquitination of Lys-120 (H2AK119Ub) by TRIM37 may promote transformation of cells in a number of breast cancers. Following DNA double-strand breaks (DSBs), it is ubiquitinated through 'Lys-63' linkage of ubiquitin moieties by the E2 ligase UBE2N and the E3 ligases RNF8 and RNF168, leading to the recruitment of repair proteins to sites of DNA damage. Ubiquitination at Lys-14 and Lys-16 (H2AK13Ub and H2AK15Ub, respectively) in response to DNA damage is initiated by RNF168 that mediates monoubiquitination at these 2 sites, and 'Lys-63'-linked ubiquitin are then conjugated to monoubiquitin; RNF8 is able to extend 'Lys-63'-linked ubiquitin chains in vitro. Deubiquitinated by USP51 at Lys-14 and Lys-16 (H2AK13Ub and H2AK15Ub, respectively) after damaged DNA is repaired. H2AK119Ub and ionizing radiation-induced 'Lys-63'-linked ubiquitination (H2AK13Ub and H2AK15Ub) are distinct events. Phosphorylation on Ser-2 (H2AS1ph) is enhanced during mitosis. Phosphorylation on Ser-2 by RPS6KA5/MSK1 directly represses transcription. Acetylation of H3 inhibits Ser-2 phosphorylation by RPS6KA5/MSK1. Phosphorylation at Thr-121 (H2AT120ph) by DCAF1 is present in the regulatory region of many tumor suppresor genes and down-regulates their transcription. In terms of processing, glutamine methylation at Gln-105 (H2AQ104me) by FBL is specifically dedicated to polymerase I. It is present at 35S ribosomal DNA locus and impairs binding of the FACT complex. Post-translationally, symmetric dimethylation on Arg-4 by the PRDM1/PRMT5 complex may play a crucial role in the germ-cell lineage. Crotonylation (Kcr) is specifically present in male germ cells and marks testis-specific genes in post-meiotic cells, including X-linked genes that escape sex chromosome inactivation in haploid cells. Crotonylation marks active promoters and enhancers and confers resistance to transcriptional repressors. It is also associated with post-meiotically activated genes on autosomes. In terms of processing, lactylated in macrophages by EP300/P300 by using lactoyl-CoA directly derived from endogenous or exogenous lactate, leading to stimulates gene transcription.

Its subcellular location is the nucleus. The protein resides in the chromosome. Core component of nucleosome. Nucleosomes wrap and compact DNA into chromatin, limiting DNA accessibility to the cellular machineries which require DNA as a template. Histones thereby play a central role in transcription regulation, DNA repair, DNA replication and chromosomal stability. DNA accessibility is regulated via a complex set of post-translational modifications of histones, also called histone code, and nucleosome remodeling. The polypeptide is Histone H2A type 3 (Homo sapiens (Human)).